Here is a 169-residue protein sequence, read N- to C-terminus: Positive control factor (169 aa).

Residues 132 to 157 (YERIADLLGVKKSTVQTTIKRASLKM) constitute a DNA-binding region (H-T-H motif).

In terms of biological role, positive regulatory protein that acts at the late promoter PL. This chain is Positive control factor (xpf), found in Bacillus subtilis (strain 168).